The chain runs to 89 residues: MVISDLEKYYGKPYNNAYYEISNILQEFGFFRTQGSVYLNNNSDMANLMEAIQTLSEVEWFANSVRDIRGFRVEDWSNFTKLVKRKATN.

Belongs to the VapD ribonuclease family. As to quaternary structure, homodimer.

Cleaves ssRNA, mostly between U:A. In Riemerella anatipestifer (Moraxella anatipestifer), this protein is Endoribonuclease VapD 1.